Consider the following 374-residue polypeptide: Putative glutamate--cysteine ligase 2-1 (374 aa).

Belongs to the glutamate--cysteine ligase type 2 family. YbdK subfamily.

The enzyme catalyses L-cysteine + L-glutamate + ATP = gamma-L-glutamyl-L-cysteine + ADP + phosphate + H(+). In terms of biological role, ATP-dependent carboxylate-amine ligase which exhibits weak glutamate--cysteine ligase activity. The sequence is that of Putative glutamate--cysteine ligase 2-1 from Saccharopolyspora erythraea (strain ATCC 11635 / DSM 40517 / JCM 4748 / NBRC 13426 / NCIMB 8594 / NRRL 2338).